The primary structure comprises 356 residues: Fructose import permease protein FruF (356 aa).

The next 7 membrane-spanning stretches (helical) occupy residues 25-45 (IVAFILLVIICTIFQHDFLAL), 77-97 (LVISTAGIDLSVGSVMAVAGA), 113-133 (ILIALAVGLAIGCVNGALVSF), 180-200 (FILGIPANFVIAVIIVILVGL), 231-251 (ILFLVYAISGFLAAIAGLFAT), 268-290 (MYAILAVVIGGTSLLGGKFSLAG), and 308-328 (LGVNAEATPAFFAVVVIVICV).

This sequence belongs to the binding-protein-dependent transport system permease family. As to quaternary structure, the complex is composed of an ATP-binding protein (FruK), two transmembrane proteins (FruF and FruG) and a solute-binding protein (FruE).

The protein resides in the cell membrane. Functionally, part of the high-affinity ABC transporter complex FruEKFG involved in fructose uptake. Can also transport ribose and xylose, with lower affinity. Probably responsible for the translocation of the substrate across the membrane. The protein is Fructose import permease protein FruF of Bifidobacterium longum (strain NCC 2705).